The primary structure comprises 380 residues: GATOR1 complex protein NPRL2 (380 aa).

Residues 1–133 (MGSSCRIECI…SKQKLVPIMT (133 aa)) form an interaction with PDPK1 region. Residue arginine 78 coordinates GDP. Position 78 is an asymmetric dimethylarginine (arginine 78). Residues lysine 158 and lysine 357 each participate in a glycyl lysine isopeptide (Lys-Gly) (interchain with G-Cter in ubiquitin) cross-link.

This sequence belongs to the NPR2 family. As to quaternary structure, within the GATOR complex, component of the GATOR1 subcomplex, made of DEPDC5, NPRL2 and NPRL3. GATOR1 mediates the strong interaction of the GATOR complex with small GTPases Rag (RagA/RRAGA, RagB/RRAGB, RagC/RRAGC and/or RagD/RRAGD) heterodimers. GATOR1 interacts with GPR155/LYCHOS; interaction takes place in presence of cholesterol and prevents interaction between GATOR1 and KICSTOR. Interacts with PDPK1. In terms of processing, in the presence of abundant amino acids, ubiquitinated at Lys-158 and Lys-357 via 'Lys-6'-linked ubiquitination by the WDR24 component of the GATOR2 complex, thereby inhibiting the GATOR1 complex and promoting mTORC1 activation. Asymmetric dimethylation at Arg-78 by PRMT1 inhibits the GTPase activator activity of the GATOR1 complex and consequently inducing timely mTORC1 activation under methionine-sufficient conditions.

It localises to the lysosome membrane. Catalytic component of the GATOR1 complex, a multiprotein complex that functions as an inhibitor of the amino acid-sensing branch of the mTORC1 pathway. In response to amino acid depletion, the GATOR1 complex has GTPase activating protein (GAP) activity and strongly increases GTP hydrolysis by RagA/RRAGA (or RagB/RRAGB) within heterodimeric Rag complexes, thereby turning them into their inactive GDP-bound form, releasing mTORC1 from lysosomal surface and inhibiting mTORC1 signaling. In the presence of abundant amino acids, the GATOR1 complex is ubiquitinated and inhibited by GATOR2. Within the GATOR1 complex, NPRL2 constitutes the catalytic subunit that mediates the GTPase activator activity and under methionine-sufficient conditions, the GTPase activator activity is inhibited by PRMT1 through methylation and consequently inducing timely mTORC1 activation. In terms of biological role, suppresses Src-dependent tyrosine phosphorylation and activation of PDPK1 and its downstream signaling. Down-regulates PDPK1 kinase activity by interfering with tyrosine phosphorylation at 'Tyr-9', 'Tyr-373' and 'Tyr-376' residues. May act as a tumor suppressor. Suppresses cell growth and enhances sensitivity to various anticancer drugs. This is GATOR1 complex protein NPRL2 from Bos taurus (Bovine).